The primary structure comprises 1206 residues: STE20-like serine/threonine-protein kinase (1206 aa).

Position 14 is a phosphoserine (S14). A Protein kinase domain is found at 34–292 (WEIIGELGDG…TSQLLQHPFV (259 aa)). ATP contacts are provided by residues 40–48 (LGDGAFGKV) and K63. D155 acts as the Proton acceptor in catalysis. A Phosphothreonine modification is found at T183. S189 bears the Phosphoserine mark. The tract at residues 308–352 (KAEVTEEVEDGKEEDDDDETESALPIPANKRASSDLSIASSEEDK) is disordered. The span at 312 to 328 (TEEVEDGKEEDDDDETE) shows a compositional bias: acidic residues. A phosphoserine mark is found at S340, S341, S344, S347, S348, S354, and S372. Residues 364 to 440 (SERTEHNTSG…ESQPDTEDQQ (77 aa)) form a disordered region. Basic and acidic residues-rich tracts occupy residues 381–395 (LSEK…KTVD) and 420–429 (ENGREKKRPQ). A coiled-coil region spans residues 468-492 (EEDRNEENQEIIENKLTQSEEIKDI). 2 disordered regions span residues 515–761 (DNEV…SSSD) and 773–792 (TKDS…KTLK). A compositionally biased stretch (basic and acidic residues) spans 520 to 536 (FTKEETQEKLGKDDKTH). Phosphoserine is present on residues S545 and S563. The segment covering 556–565 (TQKSAEQSQD) has biased composition (polar residues). The span at 584–609 (KATEGPEAHGAEEEPRSGERVEDKQL) shows a compositional bias: basic and acidic residues. The span at 634–643 (EEPETDEVDQ) shows a compositional bias: acidic residues. S645, S649, and S668 each carry phosphoserine. A compositionally biased stretch (low complexity) spans 691-702 (AEPQAPAASQAS). The segment covering 747-757 (TDSGTGSTVEN) has biased composition (polar residues). Residues S776 and S778 each carry the phosphoserine modification. T813 is subject to Phosphothreonine. Position 817 is a phosphoserine (S817). Residues 825–1037 (LRRQELRELR…LKNRQTQERA (213 aa)) are a coiled coil. The region spanning 874–909 (DQEIENLEKQQKQTIERLEQEHTNRLRDEAKRIKGE) is the UVR domain. T1065 bears the Phosphothreonine mark. The stretch at 1077–1151 (AAQEEKRQKN…ELKEWREKLR (75 aa)) forms a coiled coil. A compositionally biased stretch (basic and acidic residues) spans 1079-1099 (QEEKRQKNERMAQHQKHESQM). 2 disordered regions span residues 1079–1100 (QEEK…SQMR) and 1181–1206 (LNPS…AWAG). Polar residues predominate over residues 1181 to 1200 (LNPSAQSRGCLQTSHPSSTR).

It belongs to the protein kinase superfamily. STE Ser/Thr protein kinase family. STE20 subfamily. Proteolytically cleaved by caspase-3. In terms of processing, autophosphorylated.

It localises to the cytoplasm. It carries out the reaction L-seryl-[protein] + ATP = O-phospho-L-seryl-[protein] + ADP + H(+). The enzyme catalyses L-threonyl-[protein] + ATP = O-phospho-L-threonyl-[protein] + ADP + H(+). In terms of biological role, mediates apoptosis and actin stress fiber dissolution. This chain is STE20-like serine/threonine-protein kinase (Slk), found in Rattus norvegicus (Rat).